The sequence spans 336 residues: tRNA N6-adenosine threonylcarbamoyltransferase (336 aa).

Fe cation is bound by residues H112 and H116. Substrate contacts are provided by residues 136 to 140, D169, G182, and N276; that span reads LVSGG. Fe cation is bound at residue D304.

This sequence belongs to the KAE1 / TsaD family. Fe(2+) serves as cofactor.

It localises to the cytoplasm. It catalyses the reaction L-threonylcarbamoyladenylate + adenosine(37) in tRNA = N(6)-L-threonylcarbamoyladenosine(37) in tRNA + AMP + H(+). Its function is as follows. Required for the formation of a threonylcarbamoyl group on adenosine at position 37 (t(6)A37) in tRNAs that read codons beginning with adenine. Is involved in the transfer of the threonylcarbamoyl moiety of threonylcarbamoyl-AMP (TC-AMP) to the N6 group of A37, together with TsaE and TsaB. TsaD likely plays a direct catalytic role in this reaction. In Francisella tularensis subsp. holarctica (strain LVS), this protein is tRNA N6-adenosine threonylcarbamoyltransferase.